The chain runs to 279 residues: MLKILSPAKVNLHLRVLRKREDNYHDLATLMQKVSLYDELEFQPSNRGIQLRCPGFFLPENEENIVFRAAKKILSFSGCPTGVTITLRKNIPLAAGLGGGSSNAAMTLLALNKLFRLNFSTGELMKIGATLGADVPFFLFHGPAWAYGIGDRLKAALDVPKVWFVLINPGFEVSTRVIYEKLNLGLTKEIIHYSIPRFLSMEDMAAGLHNDLESVTLKMHPSLQEIKDLLCSYGAAGALMSGSGPTVFGIFENEDKAKEAETVLGKPGTWAVFCVRSID.

K9 is an active-site residue. Residue 92–102 (PLAAGLGGGSS) coordinates ATP. Residue D134 is part of the active site.

The protein belongs to the GHMP kinase family. IspE subfamily.

The catalysed reaction is 4-CDP-2-C-methyl-D-erythritol + ATP = 4-CDP-2-C-methyl-D-erythritol 2-phosphate + ADP + H(+). It participates in isoprenoid biosynthesis; isopentenyl diphosphate biosynthesis via DXP pathway; isopentenyl diphosphate from 1-deoxy-D-xylulose 5-phosphate: step 3/6. Its function is as follows. Catalyzes the phosphorylation of the position 2 hydroxy group of 4-diphosphocytidyl-2C-methyl-D-erythritol. The protein is 4-diphosphocytidyl-2-C-methyl-D-erythritol kinase of Syntrophus aciditrophicus (strain SB).